A 620-amino-acid polypeptide reads, in one-letter code: Glutathione-regulated potassium-efflux system protein KefC (620 aa).

The Periplasmic portion of the chain corresponds to 1–3; that stretch reads MDS. Residues 4–24 form a helical membrane-spanning segment; sequence HTLLQALIYLGSAALIVPIAV. Arginine 25 is a topological domain (cytoplasmic). The chain crosses the membrane as a helical span at residues 26–46; it reads LGLGSVLGYLIAGCIIGPWGL. The Periplasmic segment spans residues 47–53; that stretch reads RLVTDAE. A helical membrane pass occupies residues 54-74; it reads SILHFAEIGVVLMLFVIGLEL. Over 75–89 the chain is Cytoplasmic; that stretch reads DPQRLWKLRASVFGG. A helical transmembrane segment spans residues 90 to 110; sequence GALQMVVCGGLIGLFCMFLGL. At 111-113 the chain is on the periplasmic side; sequence RWQ. The helical transmembrane segment at 114-134 threads the bilayer; it reads VAELIGMTLALSSTAIAMQAM. The Cytoplasmic segment spans residues 135–148; sequence NERNLTVSQVGRSA. The chain crosses the membrane as a helical span at residues 149 to 169; the sequence is FAVLLFQDIAAIPLVAMIPLL. Topologically, residues 170-177 are periplasmic; that stretch reads AASGASTT. A helical transmembrane segment spans residues 178–198; that stretch reads LGAFALSALKVAGALALVVLL. Residues 199 to 213 lie on the Cytoplasmic side of the membrane; that stretch reads GRYVTRPALRFVARS. Residues 214-233 form a helical membrane-spanning segment; the sequence is GLREVFSAVALFLVFGFGLL. The Periplasmic portion of the chain corresponds to 234–236; the sequence is LEE. The helical transmembrane segment at 237 to 254 threads the bilayer; that stretch reads VGLSMAMGAFLAGVLLAS. Over 255 to 269 the chain is Cytoplasmic; the sequence is SEYRHALESDIEPFK. The chain crosses the membrane as a helical span at residues 270-290; that stretch reads GLLLGLFFIGVGMSIDFGTLV. Residues 291-293 lie on the Periplasmic side of the membrane; sequence ENP. The helical transmembrane segment at 294–314 threads the bilayer; sequence LRILLLLAGFLAIKIVMLWLV. At 315–326 the chain is on the cytoplasmic side; sequence ARTLGVPAKQRR. A helical membrane pass occupies residues 327–347; the sequence is WFAVLLGQGSEFAFVVFGAAQ. Residues 348–358 lie on the Periplasmic side of the membrane; it reads MADVLEPEWAK. The chain crosses the membrane as a helical span at residues 359–379; it reads ALTLAVALSMAATPIFLVLLT. Residues 380–620 lie on the Cytoplasmic side of the membrane; that stretch reads RMEKTATGEA…ADEPEVKPSI (241 aa). In terms of domain architecture, RCK N-terminal spans 399-518; that stretch reads QPRVIVAGFG…AGVAMPERET (120 aa). The tract at residues 599–620 is disordered; sequence QGTAEGKHSGKAADEPEVKPSI. The span at 603-620 shows a compositional bias: basic and acidic residues; sequence EGKHSGKAADEPEVKPSI.

The protein belongs to the monovalent cation:proton antiporter 2 (CPA2) transporter (TC 2.A.37) family. KefC subfamily. Homodimer. Interacts with the regulatory subunit KefF.

The protein localises to the cell inner membrane. Functionally, pore-forming subunit of a potassium efflux system that confers protection against electrophiles. Catalyzes K(+)/H(+) antiport. The protein is Glutathione-regulated potassium-efflux system protein KefC of Salmonella typhi.